A 526-amino-acid polypeptide reads, in one-letter code: GMP synthase [glutamine-hydrolyzing] (526 aa).

Residues 10–208 (RILILDFGSQ…VVDLCGCEKL (199 aa)) enclose the Glutamine amidotransferase type-1 domain. Residue Cys-87 is the Nucleophile of the active site. Active-site residues include His-182 and Glu-184. Positions 209–401 (WTTENIIDDS…LGLPSDMVYR (193 aa)) constitute a GMPS ATP-PPase domain. An ATP-binding site is contributed by 236–242 (SGGVDSS).

In terms of assembly, homodimer.

The enzyme catalyses XMP + L-glutamine + ATP + H2O = GMP + L-glutamate + AMP + diphosphate + 2 H(+). Its pathway is purine metabolism; GMP biosynthesis; GMP from XMP (L-Gln route): step 1/1. In terms of biological role, catalyzes the synthesis of GMP from XMP. This Hydrogenovibrio crunogenus (strain DSM 25203 / XCL-2) (Thiomicrospira crunogena) protein is GMP synthase [glutamine-hydrolyzing].